The chain runs to 299 residues: Taste receptor type 2 member 5 (299 aa).

Position 1 (Met-1) is a topological domain, extracellular. A helical membrane pass occupies residues 2 to 22; sequence LSAGLGLLMLVAVVEFLIGLI. Topologically, residues 23 to 45 are cytoplasmic; that stretch reads GNGVLVVWSFREWIRKFSWSSYN. A helical transmembrane segment spans residues 46-66; it reads LIILGLAGCRFVLQWLIILDL. Residues 67–82 are Extracellular-facing; that stretch reads SLFPLFQSSRWLRYLS. The helical transmembrane segment at 83–103 threads the bilayer; the sequence is IFWVLVSQASLWFATFLSVFY. The Cytoplasmic portion of the chain corresponds to 104-127; it reads CKKITTFDHPAYLWLKQRAYNLSL. The chain crosses the membrane as a helical span at residues 128–148; it reads WCLLGYFIINLLLTVQIGLMF. Residues 149 to 175 are Extracellular-facing; it reads YHPPQGNSSIRYPFESWQYLYAFRLNS. Residue Asn-155 is glycosylated (N-linked (GlcNAc...) asparagine). Residues 176–196 traverse the membrane as a helical segment; that stretch reads GSYLPLMVFLVSSGMLIVSLY. Residues 197 to 223 are Cytoplasmic-facing; the sequence is THHKKMKVHSAGRRDVRAKAHITALKS. A helical membrane pass occupies residues 224–244; sequence LGCFLLLHLVYIMASPFSIAS. Over 245-253 the chain is Extracellular; sequence KTYPPDLTS. The chain crosses the membrane as a helical span at residues 254–274; that stretch reads VFIWETLMAAYPSLHSLILIM. Topologically, residues 275 to 299 are cytoplasmic; the sequence is GIPRVKQTCQKILWKTVCARRCWGP.

This sequence belongs to the G-protein coupled receptor T2R family.

It localises to the membrane. Receptor that may play a role in the perception of bitterness and is gustducin-linked. May play a role in sensing the chemical composition of the gastrointestinal content. The activity of this receptor may stimulate alpha gustducin, mediate PLC-beta-2 activation and lead to the gating of TRPM5. This Pan paniscus (Pygmy chimpanzee) protein is Taste receptor type 2 member 5 (TAS2R5).